The primary structure comprises 122 residues: Probable DNA-directed RNA polymerase II subunit RPB11 (122 aa).

It belongs to the archaeal Rpo11/eukaryotic RPB11/RPC19 RNA polymerase subunit family. As to quaternary structure, component of the RNA polymerase II (Pol II) complex consisting of 12 subunits.

It is found in the nucleus. Its function is as follows. DNA-dependent RNA polymerase catalyzes the transcription of DNA into RNA using the four ribonucleoside triphosphates as substrates. Component of RNA polymerase II which synthesizes mRNA precursors and many functional non-coding RNAs. Pol II is the central component of the basal RNA polymerase II transcription machinery. It is composed of mobile elements that move relative to each other. RPB11 is part of the core element with the central large cleft. This is Probable DNA-directed RNA polymerase II subunit RPB11 (rpb-11) from Caenorhabditis briggsae.